Here is a 323-residue protein sequence, read N- to C-terminus: Oligodendrocyte transcription factor 2 (323 aa).

Positions 1–13 are enriched in polar residues; sequence MDSDASLVSSRPS. Positions 1-107 are disordered; the sequence is MDSDASLVSS…KKQMTEPELQ (107 aa). The span at 77–93 shows a compositional bias: low complexity; that stretch reads SSSSSTSSSTSSAATSS. One can recognise a bHLH domain in the interval 108 to 162; the sequence is QLRLKINSRERKRMHDLNIAMDGLREVMPYAHGPSVRKLSKIATLLLARNYILML.

Interacts with NKX2-2. Interacts with ZNF488. In terms of tissue distribution, expressed specifically in the brain.

The protein localises to the nucleus. The protein resides in the cytoplasm. Required for oligodendrocyte and motor neuron specification in the spinal cord, as well as for the development of somatic motor neurons in the hindbrain. Functions together with ZNF488 to promote oligodendrocyte differentiation. Cooperates with OLIG1 to establish the pMN domain of the embryonic neural tube. Antagonist of V2 interneuron and of NKX2-2-induced V3 interneuron development. This chain is Oligodendrocyte transcription factor 2 (Olig2), found in Mus musculus (Mouse).